The following is a 170-amino-acid chain: MRDVIRGRAWVFGDDIDTDQIIPGRYLTTQDPEELAKHVMEGADPEFPEKVREGDVIVAGKNFGCGSSREHAPIALKAAGIACVVTRSFARIFYRNAINLGLPLVVCPGVDDAFEDGQGIEVNLREGYVRNLDTGEELEAKPLPDFMMRILEAGGLVELIKREGPRAFEG.

The protein belongs to the LeuD family. LeuD type 2 subfamily. Heterodimer of LeuC and LeuD.

It carries out the reaction (2R,3S)-3-isopropylmalate = (2S)-2-isopropylmalate. It participates in amino-acid biosynthesis; L-leucine biosynthesis; L-leucine from 3-methyl-2-oxobutanoate: step 2/4. In terms of biological role, catalyzes the isomerization between 2-isopropylmalate and 3-isopropylmalate, via the formation of 2-isopropylmaleate. The protein is 3-isopropylmalate dehydratase small subunit 1 (leuD1) of Methanopyrus kandleri (strain AV19 / DSM 6324 / JCM 9639 / NBRC 100938).